The sequence spans 340 residues: Phosphoribosylformylglycinamidine cyclo-ligase (340 aa).

This sequence belongs to the AIR synthase family.

The protein resides in the cytoplasm. It carries out the reaction 2-formamido-N(1)-(5-O-phospho-beta-D-ribosyl)acetamidine + ATP = 5-amino-1-(5-phospho-beta-D-ribosyl)imidazole + ADP + phosphate + H(+). It participates in purine metabolism; IMP biosynthesis via de novo pathway; 5-amino-1-(5-phospho-D-ribosyl)imidazole from N(2)-formyl-N(1)-(5-phospho-D-ribosyl)glycinamide: step 2/2. This Streptococcus pyogenes serotype M1 protein is Phosphoribosylformylglycinamidine cyclo-ligase.